Reading from the N-terminus, the 374-residue chain is Growth/differentiation factor 8 (374 aa).

Positions 1-22 (MHFTQVLISLSVLIACGPVGYG) are cleaved as a signal peptide. Positions 23–265 (DITAHQQPST…ISEGPKRIRR (243 aa)) are excised as a propeptide. N-linked (GlcNAc...) asparagine glycans are attached at residues N72 and N274. Disulfide bonds link C271/C281, C280/C339, C308/C371, and C312/C373.

The protein belongs to the TGF-beta family. Homodimer; disulfide-linked. Predominantly expressed in muscle. At hatching, expression is strongest in the skin epithelium, and is also found in the retina and brain. From day 28, expressed in skeletal muscle. In the adult, highest expression is seen in the gastrointestinal tract, brain, muscle, heart and testis. Also expressed in the adult pharynx, kidney, spleen, liver, gill, eyes, skin, swim bladder and ovary.

The protein resides in the secreted. Its function is as follows. Acts specifically as a negative regulator of skeletal muscle growth. May down-regulate muscle-specific transcription factors such as myod and myog. The protein is Growth/differentiation factor 8 (mstnb) of Danio rerio (Zebrafish).